Reading from the N-terminus, the 333-residue chain is Probable tRNA pseudouridine synthase B (333 aa).

D71 functions as the Nucleophile in the catalytic mechanism. Positions 238 to 313 (LPKIWVRDSA…LVARTDRVVM (76 aa)) constitute a PUA domain.

It belongs to the pseudouridine synthase TruB family. Type 2 subfamily.

The catalysed reaction is uridine(55) in tRNA = pseudouridine(55) in tRNA. Could be responsible for synthesis of pseudouridine from uracil-55 in the psi GC loop of transfer RNAs. This chain is Probable tRNA pseudouridine synthase B, found in Pyrobaculum calidifontis (strain DSM 21063 / JCM 11548 / VA1).